The primary structure comprises 263 residues: 4-hydroxy-tetrahydrodipicolinate reductase (263 aa).

NAD(+) contacts are provided by residues 8 to 13 (GACGRM), aspartate 34, 99 to 101 (GTT), and 125 to 128 (SPNY). The active-site Proton donor/acceptor is histidine 157. Histidine 158 contacts (S)-2,3,4,5-tetrahydrodipicolinate. Lysine 161 serves as the catalytic Proton donor. (S)-2,3,4,5-tetrahydrodipicolinate is bound at residue 167-168 (GT).

The protein belongs to the DapB family.

It is found in the cytoplasm. The catalysed reaction is (S)-2,3,4,5-tetrahydrodipicolinate + NAD(+) + H2O = (2S,4S)-4-hydroxy-2,3,4,5-tetrahydrodipicolinate + NADH + H(+). The enzyme catalyses (S)-2,3,4,5-tetrahydrodipicolinate + NADP(+) + H2O = (2S,4S)-4-hydroxy-2,3,4,5-tetrahydrodipicolinate + NADPH + H(+). It functions in the pathway amino-acid biosynthesis; L-lysine biosynthesis via DAP pathway; (S)-tetrahydrodipicolinate from L-aspartate: step 4/4. Its function is as follows. Catalyzes the conversion of 4-hydroxy-tetrahydrodipicolinate (HTPA) to tetrahydrodipicolinate. This Methanosarcina barkeri (strain Fusaro / DSM 804) protein is 4-hydroxy-tetrahydrodipicolinate reductase.